Here is a 459-residue protein sequence, read N- to C-terminus: Phosphomethylpyrimidine synthase (459 aa).

Substrate contacts are provided by residues N80, M109, Y139, H175, 195 to 197 (SRG), 236 to 239 (DSLR), and E275. Residue H279 coordinates Zn(2+). Y302 is a substrate binding site. Residue H343 coordinates Zn(2+). C423, C426, and C431 together coordinate [4Fe-4S] cluster.

The protein belongs to the ThiC family. The cofactor is [4Fe-4S] cluster.

It catalyses the reaction 5-amino-1-(5-phospho-beta-D-ribosyl)imidazole + S-adenosyl-L-methionine = 4-amino-2-methyl-5-(phosphooxymethyl)pyrimidine + CO + 5'-deoxyadenosine + formate + L-methionine + 3 H(+). Its pathway is cofactor biosynthesis; thiamine diphosphate biosynthesis. Its function is as follows. Catalyzes the synthesis of the hydroxymethylpyrimidine phosphate (HMP-P) moiety of thiamine from aminoimidazole ribotide (AIR) in a radical S-adenosyl-L-methionine (SAM)-dependent reaction. This is Phosphomethylpyrimidine synthase from Synechocystis sp. (strain ATCC 27184 / PCC 6803 / Kazusa).